The following is a 105-amino-acid chain: Small ribosomal subunit protein uS10 (105 aa).

Belongs to the universal ribosomal protein uS10 family. As to quaternary structure, part of the 30S ribosomal subunit.

Functionally, involved in the binding of tRNA to the ribosomes. This is Small ribosomal subunit protein uS10 from Francisella philomiragia subsp. philomiragia (strain ATCC 25017 / CCUG 19701 / FSC 153 / O#319-036).